The following is a 3120-amino-acid chain: DNA-directed RNA polymerase subunit beta'' (3120 aa).

4 residues coordinate Zn(2+): Cys-323, Cys-396, Cys-403, and Cys-406. An insert-1 region spans residues 595-1130; that stretch reads FIGEGKQNVL…LKTLVLKKWF (536 aa). Positions 1796–2346 are insert-2; that stretch reads KGHLVAYARP…NGIIQAKSLL (551 aa). The tract at residues 2422–2610 is insert-3; that stretch reads NSNFLENTHF…PEGEGEKDMT (189 aa). Residues 2726 to 2801 form an insert-4 region; that stretch reads FSKKRWKKSI…KQNQTIILAL (76 aa). The tract at residues 2856–2996 is insert-5; the sequence is ASKMSEYMFS…LNQLLSNNLD (141 aa). Residues 2926 to 2956 form a disordered region; it reads EGIDSSKIPSSNIPEGKVTQNNKRKSTRKNV. A compositionally biased stretch (polar residues) spans 2932-2946; sequence KIPSSNIPEGKVTQN.

It belongs to the RNA polymerase beta' chain family. RpoC2 subfamily. In plastids the minimal PEP RNA polymerase catalytic core is composed of four subunits: alpha, beta, beta', and beta''. When a (nuclear-encoded) sigma factor is associated with the core the holoenzyme is formed, which can initiate transcription. Zn(2+) is required as a cofactor.

It is found in the plastid. The protein localises to the chloroplast. The enzyme catalyses RNA(n) + a ribonucleoside 5'-triphosphate = RNA(n+1) + diphosphate. DNA-dependent RNA polymerase catalyzes the transcription of DNA into RNA using the four ribonucleoside triphosphates as substrates. The protein is DNA-directed RNA polymerase subunit beta'' of Chlamydomonas reinhardtii (Chlamydomonas smithii).